The following is a 330-amino-acid chain: Ig gamma-2A chain C region, A allele (330 aa).

Ig-like domains are found at residues 6–98 (PSVY…KKIE), 121–220 (PSVF…RTIS), and 229–325 (PQVY…KSFS). 3 disulfide bridges follow: Cys27–Cys82, Cys144–Cys204, and Cys250–Cys308. The N-linked (GlcNAc...) asparagine glycan is linked to Asn180.

This chain is Ig gamma-2A chain C region, A allele (Ighg), found in Mus musculus (Mouse).